Reading from the N-terminus, the 235-residue chain is Large ribosomal subunit protein uL1 (235 aa).

Belongs to the universal ribosomal protein uL1 family. In terms of assembly, part of the 50S ribosomal subunit.

Binds directly to 23S rRNA. The L1 stalk is quite mobile in the ribosome, and is involved in E site tRNA release. Functionally, protein L1 is also a translational repressor protein, it controls the translation of the L11 operon by binding to its mRNA. The protein is Large ribosomal subunit protein uL1 of Thermobifida fusca (strain YX).